We begin with the raw amino-acid sequence, 428 residues long: Dihydroorotase (428 aa).

His59 and His61 together coordinate Zn(2+). Substrate contacts are provided by residues 61–63 (HLR) and Asn93. Positions 151, 178, and 231 each coordinate Zn(2+). Asn277 contributes to the substrate binding site. Asp304 is a Zn(2+) binding site. Residue Asp304 is part of the active site. Substrate-binding positions include His308 and 322-323 (FG).

It belongs to the metallo-dependent hydrolases superfamily. DHOase family. Class I DHOase subfamily. Zn(2+) serves as cofactor.

The catalysed reaction is (S)-dihydroorotate + H2O = N-carbamoyl-L-aspartate + H(+). Its pathway is pyrimidine metabolism; UMP biosynthesis via de novo pathway; (S)-dihydroorotate from bicarbonate: step 3/3. In terms of biological role, catalyzes the reversible cyclization of carbamoyl aspartate to dihydroorotate. In Halalkalibacterium halodurans (strain ATCC BAA-125 / DSM 18197 / FERM 7344 / JCM 9153 / C-125) (Bacillus halodurans), this protein is Dihydroorotase.